A 686-amino-acid polypeptide reads, in one-letter code: Phosphatidylinositol 4,5-bisphosphate-binding protein SLM1 (686 aa).

The tract at residues 33–147 (RSMTSADHAN…KQLQGKNSLT (115 aa)) is disordered. The segment covering 45 to 63 (QQQQQQQQQQQQQQQQQQQ) has biased composition (low complexity). The span at 64-126 (SASFQNGSLT…PNIDSNTNVT (63 aa)) shows a compositional bias: polar residues. The span at 133 to 144 (NNNNGKQLQGKN) shows a compositional bias: low complexity. 3 positions are modified to phosphoserine: Ser-145, Ser-150, and Ser-153. Positions 157 to 172 (SSLQRQRLAQQQQQQQ) are enriched in low complexity. A disordered region spans residues 157–176 (SSLQRQRLAQQQQQQQDPRS). Residues 296-381 (RLEDLRRDLI…FLHEAFDNLE (86 aa)) adopt a coiled-coil conformation. The PH domain maps to 468 to 581 (YEIKSGFLER…WFDNLKILTS (114 aa)). The tract at residues 626–669 (VENDENDDINSNYVGSTVTPKLDNQTNTNTSMSSLPDTNDSELQ) is disordered. Residues 634-663 (INSNYVGSTVTPKLDNQTNTNTSMSSLPDT) are compositionally biased toward polar residues. The PXIXIT-like, required for interaction with CNA1 and CNA2, and calcineurin-dependent dephosphorylation motif lies at 673–678 (PNIYIQ).

In terms of assembly, heterodimer of SLM1-SLM2. Binds phosphatidylinositol 4,5-bisphosphate, which is required for function. Interacts with the TORC2 subunits AVO2, BIT61 and TOR2. Interacts with the calcineurin catalytic subunits CNA1 and CNA2. Phosphorylated by the target of rapamycin complex 2 (TORC2) and dephosphorylated by serine/threonine-protein phosphatase 2B (calcineurin). Dephosphorylated in response to the disruption or inhibition of sphingolipid synthesis.

The protein localises to the cell membrane. In terms of biological role, together with SLM2, acts as an effector of the TORC2- and calcineurin-signaling pathways. Phosphorylated and activated by TORC2 under favorable growth conditions. Mediates actin polarization via inhibition of calcineurin-dependent transcription. Upon nutrient limitation or environmental stress, gets dephosphorylated by calcineurin. Dephosphorylation inhibits its interaction with TORC2, thereby antagonizing TORC2 signaling and mediating calcineurin-dependent actin depolarization. May play a role in the response to the disruption of sphingolipid synthesis, where dephosphorylation of SLM1 leads to the activation and phosphorylation of YPK1 through the TORC2 and PKH1 pathways, which in turn phosphorylates ORM1 and LAG1 to activate sphingolipid synthesis. Also functions in heat-induced, calcineurin-mediated uracil permease (FUR4) endocytosis. The polypeptide is Phosphatidylinositol 4,5-bisphosphate-binding protein SLM1 (SLM1) (Saccharomyces cerevisiae (strain ATCC 204508 / S288c) (Baker's yeast)).